A 109-amino-acid chain; its full sequence is Phosphoribosyl-ATP pyrophosphatase (109 aa).

It belongs to the PRA-PH family.

Its subcellular location is the cytoplasm. It carries out the reaction 1-(5-phospho-beta-D-ribosyl)-ATP + H2O = 1-(5-phospho-beta-D-ribosyl)-5'-AMP + diphosphate + H(+). It participates in amino-acid biosynthesis; L-histidine biosynthesis; L-histidine from 5-phospho-alpha-D-ribose 1-diphosphate: step 2/9. In Marinobacter nauticus (strain ATCC 700491 / DSM 11845 / VT8) (Marinobacter aquaeolei), this protein is Phosphoribosyl-ATP pyrophosphatase.